Reading from the N-terminus, the 175-residue chain is Small ribosomal subunit protein uS5 (175 aa).

The 64-residue stretch at tryptophan 19 to isoleucine 82 folds into the S5 DRBM domain.

The protein belongs to the universal ribosomal protein uS5 family. As to quaternary structure, part of the 30S ribosomal subunit. Contacts proteins S4 and S8.

Functionally, with S4 and S12 plays an important role in translational accuracy. Located at the back of the 30S subunit body where it stabilizes the conformation of the head with respect to the body. In Nostoc punctiforme (strain ATCC 29133 / PCC 73102), this protein is Small ribosomal subunit protein uS5.